The primary structure comprises 681 residues: MQKGNIGVTTENIFPIIKKFLYSDHEIFLRELVSNAVDATQKLNTLASIGEFKGELGDLTIHVELGKDTITISDRGIGLTAEEIEKYINQIAFSGANDFLEKYKDDANAIIGHFGLGFYSAFMVAKKVEIITKSYRDEAQAIKWTCDGSPEFTIEEVDKADRGSDIILYIDDDCKEFLEEARVSELLKKYCSFLPVPIAFGKKKEWKDGKQIETTEDNIINDTTPLWTRKPSELSDEDYKSFYTKLYPMSDEPLFWIHLNVDYPFHLTGILYFPKVKSNIELNKNKIQLYCNQVYVTDSVEGIVPDFLTLLHGVIDSPDIPLNVSRSYLQSDSNVKKISTYITKKVSDRLQSIFKNDRKQFEEKWNDLKIFINYGMLTQEDFYEKAQKFALFTDTDNKHYTFEEYQTLIKDNQTDKDGNLIYLYANNKDEQFSYIEAATNKGYNVLLMDGQLDVAMVSMLEQKFEKSRFTRVDSDVIDNLIIKEDKKNETLEGEKQEAITTAFKSQLPKMDKVEFNVMTQALGDNSAPVMITQSEYMRRMKEMANIQAGMSFYGEMPDMFNLVLNSDHKLIKQVLDEEEAACHPEVAPIQTEMNSVSKRRNELKDSQKDKKEEDIPTAEKDELNELDKKWDELKNKKEGIFAGYASNNKVIRQLIDLALLQNNMLKGEALNNFVKRSIELI.

The a; substrate-binding stretch occupies residues 1–326 (MQKGNIGVTT…SPDIPLNVSR (326 aa)). The b stretch occupies residues 327–545 (SYLQSDSNVK…YMRRMKEMAN (219 aa)). Residues 546–681 (IQAGMSFYGE…NFVKRSIELI (136 aa)) are c. The segment at 589–620 (IQTEMNSVSKRRNELKDSQKDKKEEDIPTAEK) is disordered. The segment covering 599-620 (RRNELKDSQKDKKEEDIPTAEK) has biased composition (basic and acidic residues).

The protein belongs to the heat shock protein 90 family. Homodimer.

Its subcellular location is the cytoplasm. Functionally, molecular chaperone. Has ATPase activity. This is Chaperone protein HtpG from Bacteroides thetaiotaomicron (strain ATCC 29148 / DSM 2079 / JCM 5827 / CCUG 10774 / NCTC 10582 / VPI-5482 / E50).